We begin with the raw amino-acid sequence, 450 residues long: LanC-like protein 2 (450 aa).

G2 is lipidated: N-myristoyl glycine. The interval 2–15 (GETMSKRLKLHLGG) is interaction with inositol phospholipids. At Y198 the chain carries Phosphotyrosine.

Belongs to the LanC-like protein family. As to quaternary structure, interacts with an array of inositol phospholipids such as phosphatidylinositol 3-phosphate (PI3P), phosphatidylinositol 4-phosphate (PI4P) and phosphatidylinositol 5-phosphate (PI5P). PIP-binding enhances membrane association. Post-translationally, myristoylated. Essential for membrane association. As to expression, expressed in brain and testis.

It localises to the nucleus. Its subcellular location is the cytoplasm. The protein localises to the cell membrane. Functionally, necessary for abscisic acid (ABA) binding on the cell membrane and activation of the ABA signaling pathway in granulocytes. The polypeptide is LanC-like protein 2 (LANCL2) (Homo sapiens (Human)).